The primary structure comprises 23 residues: Potassium channel toxin kappa-KTx 2.3 (23 aa).

Disulfide bonds link cysteine 4/cysteine 22 and cysteine 8/cysteine 18.

This sequence belongs to the short scorpion toxin superfamily. Potassium channel inhibitor kappa-KTx family. Kappa-KTx 2 subfamily. Expressed by the venom gland.

Its subcellular location is the secreted. Decreases the amplitude of the potassium current of the rat channels Kv1.1/KCNA1 by 33% and Kv1.2/KCNA2 by 8% as well as human Kv1.3/KCNA3 by 70%. The protein is Potassium channel toxin kappa-KTx 2.3 of Opisthacanthus madagascariensis (Scorpion).